Reading from the N-terminus, the 276-residue chain is Large ribosomal subunit protein uL2 (276 aa).

The disordered stretch occupies residues 225–276 (VMNPVDHPHGGGEGKTAAGRDPVSPWGTPTKGYRTRSNKRTDSMIVQKRHKR).

It belongs to the universal ribosomal protein uL2 family. Part of the 50S ribosomal subunit. Forms a bridge to the 30S subunit in the 70S ribosome.

One of the primary rRNA binding proteins. Required for association of the 30S and 50S subunits to form the 70S ribosome, for tRNA binding and peptide bond formation. It has been suggested to have peptidyltransferase activity; this is somewhat controversial. Makes several contacts with the 16S rRNA in the 70S ribosome. The chain is Large ribosomal subunit protein uL2 from Cupriavidus taiwanensis (strain DSM 17343 / BCRC 17206 / CCUG 44338 / CIP 107171 / LMG 19424 / R1) (Ralstonia taiwanensis (strain LMG 19424)).